Consider the following 432-residue polypeptide: Glutamyl-tRNA reductase (432 aa).

Residues 49–52 (TCNR), S109, 114–116 (EGQ), and Q120 each bind substrate. Residue C50 is the Nucleophile of the active site. 198 to 203 (GAGRMS) is a binding site for NADP(+).

Belongs to the glutamyl-tRNA reductase family. As to quaternary structure, homodimer.

The enzyme catalyses (S)-4-amino-5-oxopentanoate + tRNA(Glu) + NADP(+) = L-glutamyl-tRNA(Glu) + NADPH + H(+). It functions in the pathway porphyrin-containing compound metabolism; protoporphyrin-IX biosynthesis; 5-aminolevulinate from L-glutamyl-tRNA(Glu): step 1/2. The protein operates within porphyrin-containing compound metabolism; chlorophyll biosynthesis. Functionally, catalyzes the NADPH-dependent reduction of glutamyl-tRNA(Glu) to glutamate 1-semialdehyde (GSA). The sequence is that of Glutamyl-tRNA reductase from Synechococcus sp. (strain CC9605).